The primary structure comprises 91 residues: Small ribosomal subunit protein bS16 (91 aa).

The protein belongs to the bacterial ribosomal protein bS16 family.

The chain is Small ribosomal subunit protein bS16 from Staphylococcus epidermidis (strain ATCC 35984 / DSM 28319 / BCRC 17069 / CCUG 31568 / BM 3577 / RP62A).